Here is an 83-residue protein sequence, read N- to C-terminus: Mu-theraphotoxin-Hhn2p (83 aa).

Positions 1–21 (MKASMYLALAGLVLLFVVGYA) are cleaved as a signal peptide. The propeptide occupies 22 to 48 (SESEEKEFPRELLSKIFAVDDFKGEER). Intrachain disulfides connect C50/C65, C57/C70, and C64/C77. Position 81 is a leucine amide (L81).

This sequence belongs to the neurotoxin 10 (Hwtx-1) family. 15 (Hntx-3) subfamily. Monomer. Expressed by the venom gland.

It localises to the secreted. Lethal neurotoxin. Selectively blocks tetrodotoxin-sensitive voltage-gated sodium channels (Nav). Does not affect tetrodotoxin-resistant voltage-gated sodium channels or calcium channels. The polypeptide is Mu-theraphotoxin-Hhn2p (Cyriopagopus hainanus (Chinese bird spider)).